The primary structure comprises 616 residues: Dihydroxy-acid dehydratase (616 aa).

Residue aspartate 81 participates in Mg(2+) binding. Cysteine 122 is a [2Fe-2S] cluster binding site. Mg(2+)-binding residues include aspartate 123 and lysine 124. At lysine 124 the chain carries N6-carboxylysine. Cysteine 195 contributes to the [2Fe-2S] cluster binding site. Mg(2+) is bound at residue glutamate 491. The active-site Proton acceptor is serine 517.

It belongs to the IlvD/Edd family. In terms of assembly, homodimer. [2Fe-2S] cluster is required as a cofactor. It depends on Mg(2+) as a cofactor.

The enzyme catalyses (2R)-2,3-dihydroxy-3-methylbutanoate = 3-methyl-2-oxobutanoate + H2O. It carries out the reaction (2R,3R)-2,3-dihydroxy-3-methylpentanoate = (S)-3-methyl-2-oxopentanoate + H2O. Its pathway is amino-acid biosynthesis; L-isoleucine biosynthesis; L-isoleucine from 2-oxobutanoate: step 3/4. It functions in the pathway amino-acid biosynthesis; L-valine biosynthesis; L-valine from pyruvate: step 3/4. In terms of biological role, functions in the biosynthesis of branched-chain amino acids. Catalyzes the dehydration of (2R,3R)-2,3-dihydroxy-3-methylpentanoate (2,3-dihydroxy-3-methylvalerate) into 2-oxo-3-methylpentanoate (2-oxo-3-methylvalerate) and of (2R)-2,3-dihydroxy-3-methylbutanoate (2,3-dihydroxyisovalerate) into 2-oxo-3-methylbutanoate (2-oxoisovalerate), the penultimate precursor to L-isoleucine and L-valine, respectively. The polypeptide is Dihydroxy-acid dehydratase (Shewanella woodyi (strain ATCC 51908 / MS32)).